The chain runs to 208 residues: 2-dehydro-3-deoxy-phosphogluconate aldolase (208 aa).

Glutamate 41 serves as the catalytic Proton acceptor. The pyruvate site is built by arginine 45, threonine 68, and lysine 128. Residue lysine 128 is the Schiff-base intermediate with substrate of the active site.

Belongs to the KHG/KDPG aldolase family. In terms of assembly, homotrimer.

It is found in the cytoplasm. The enzyme catalyses 2-dehydro-3-deoxy-6-phospho-D-gluconate = D-glyceraldehyde 3-phosphate + pyruvate. The protein operates within carbohydrate acid metabolism; 2-dehydro-3-deoxy-D-gluconate degradation; D-glyceraldehyde 3-phosphate and pyruvate from 2-dehydro-3-deoxy-D-gluconate: step 2/2. In terms of biological role, involved in the degradation of glucose via the Entner-Doudoroff pathway. Catalyzes the reversible, stereospecific retro-aldol cleavage of 2-keto-3-deoxy-6-phosphogluconate (KDPG) to pyruvate and D-glyceraldehyde-3-phosphate. The protein is 2-dehydro-3-deoxy-phosphogluconate aldolase of Zymomonas mobilis subsp. mobilis (strain ATCC 31821 / ZM4 / CP4).